The following is a 172-amino-acid chain: Small ribosomal subunit protein uS5 (172 aa).

Residues 15 to 78 (LNDKLIFINR…ANAKRNLSRI (64 aa)) form the S5 DRBM domain.

The protein belongs to the universal ribosomal protein uS5 family. In terms of assembly, part of the 30S ribosomal subunit. Contacts proteins S4 and S8.

Functionally, with S4 and S12 plays an important role in translational accuracy. Its function is as follows. Located at the back of the 30S subunit body where it stabilizes the conformation of the head with respect to the body. The protein is Small ribosomal subunit protein uS5 of Dehalococcoides mccartyi (strain ATCC BAA-2266 / KCTC 15142 / 195) (Dehalococcoides ethenogenes (strain 195)).